We begin with the raw amino-acid sequence, 168 residues long: Endoribonuclease YbeY (168 aa).

3 residues coordinate Zn(2+): His127, His131, and His137.

It belongs to the endoribonuclease YbeY family. It depends on Zn(2+) as a cofactor.

It localises to the cytoplasm. Its function is as follows. Single strand-specific metallo-endoribonuclease involved in late-stage 70S ribosome quality control and in maturation of the 3' terminus of the 16S rRNA. This chain is Endoribonuclease YbeY, found in Chromobacterium violaceum (strain ATCC 12472 / DSM 30191 / JCM 1249 / CCUG 213 / NBRC 12614 / NCIMB 9131 / NCTC 9757 / MK).